A 308-amino-acid polypeptide reads, in one-letter code: U-box domain-containing protein 54 (308 aa).

The interval 172–235 is disordered; it reads FSEFSTSAEK…NESDEDPRLE (64 aa). Residues 210–227 are compositionally biased toward basic and acidic residues; it reads ESPKKGRKETIEKSKSNE. Residues 232-306 form the U-box domain; that stretch reads PRLEDFKCPI…KDWLEKNPNY (75 aa).

The enzyme catalyses S-ubiquitinyl-[E2 ubiquitin-conjugating enzyme]-L-cysteine + [acceptor protein]-L-lysine = [E2 ubiquitin-conjugating enzyme]-L-cysteine + N(6)-ubiquitinyl-[acceptor protein]-L-lysine.. It participates in protein modification; protein ubiquitination. In terms of biological role, functions as an E3 ubiquitin ligase. The polypeptide is U-box domain-containing protein 54 (PUB54) (Arabidopsis thaliana (Mouse-ear cress)).